A 459-amino-acid chain; its full sequence is tRNA modification GTPase MnmE (459 aa).

(6S)-5-formyl-5,6,7,8-tetrahydrofolate contacts are provided by R21, E84, and K123. The TrmE-type G domain maps to 219–380; the sequence is GMLTVIVGQP…LEKEIKQRVY (162 aa). N229 contributes to the K(+) binding site. GTP is bound by residues 229–234, 248–254, and 273–276; these read NVGKSS, TDIPGTT, and DTAG. Residue S233 participates in Mg(2+) binding. The K(+) site is built by T248, I250, and T253. T254 is a binding site for Mg(2+). Residue K459 coordinates (6S)-5-formyl-5,6,7,8-tetrahydrofolate.

The protein belongs to the TRAFAC class TrmE-Era-EngA-EngB-Septin-like GTPase superfamily. TrmE GTPase family. Homodimer. Heterotetramer of two MnmE and two MnmG subunits. It depends on K(+) as a cofactor.

It is found in the cytoplasm. Functionally, exhibits a very high intrinsic GTPase hydrolysis rate. Involved in the addition of a carboxymethylaminomethyl (cmnm) group at the wobble position (U34) of certain tRNAs, forming tRNA-cmnm(5)s(2)U34. The sequence is that of tRNA modification GTPase MnmE from Desulfitobacterium hafniense (strain Y51).